Consider the following 626-residue polypeptide: Endo-1,3(4)-beta-glucanase xgeA (626 aa).

The N-terminal stretch at 1 to 25 (MSSSLMRRVGSLAASAIIFPGIAHA) is a signal peptide. Positions 33-286 (ESWEGEKILN…WAGGVFGDSG (254 aa)) constitute a GH16 domain. Residue asparagine 61 is glycosylated (N-linked (GlcNAc...) asparagine). Glutamate 142 (nucleophile) is an active-site residue. The active-site Proton donor is glutamate 147. The span at 477 to 494 (ASTDAAAATTPAAEPHPS) shows a compositional bias: low complexity. A disordered region spans residues 477–533 (ASTDAAAATTPAAEPHPSNAETPADSKSSADAVTAQATKTTIAVNTPNPATDSASSV). The segment covering 495–533 (NAETPADSKSSADAVTAQATKTTIAVNTPNPATDSASSV) has biased composition (polar residues). Glycine 603 carries the GPI-anchor amidated glycine lipid modification. A propeptide spans 604-626 (VGSKVSISASVAIAAFVMLLLVN) (removed in mature form).

This sequence belongs to the glycosyl hydrolase 16 family.

The protein localises to the cell membrane. The catalysed reaction is Endohydrolysis of (1-&gt;3)- or (1-&gt;4)-linkages in beta-D-glucans when the glucose residue whose reducing group is involved in the linkage to be hydrolyzed is itself substituted at C-3.. Functionally, mixed-linked glucanase involved in the degradation of complex natural cellulosic substrates. Active on laminarin. lichenan, soluble carboxymethyl cellulose but not on pustulan. This Emericella nidulans (strain FGSC A4 / ATCC 38163 / CBS 112.46 / NRRL 194 / M139) (Aspergillus nidulans) protein is Endo-1,3(4)-beta-glucanase xgeA (xgeA).